We begin with the raw amino-acid sequence, 211 residues long: Molybdenum cofactor guanylyltransferase (211 aa).

Residues 12–14 (LAG), K25, N53, D71, and D101 contribute to the GTP site. D101 is a binding site for Mg(2+).

The protein belongs to the MobA family. In terms of assembly, monomer. It depends on Mg(2+) as a cofactor.

Its subcellular location is the cytoplasm. The catalysed reaction is Mo-molybdopterin + GTP + H(+) = Mo-molybdopterin guanine dinucleotide + diphosphate. Transfers a GMP moiety from GTP to Mo-molybdopterin (Mo-MPT) cofactor (Moco or molybdenum cofactor) to form Mo-molybdopterin guanine dinucleotide (Mo-MGD) cofactor. The chain is Molybdenum cofactor guanylyltransferase from Acidovorax ebreus (strain TPSY) (Diaphorobacter sp. (strain TPSY)).